The primary structure comprises 185 residues: Ribosome-recycling factor (185 aa).

This sequence belongs to the RRF family.

The protein localises to the cytoplasm. Its function is as follows. Responsible for the release of ribosomes from messenger RNA at the termination of protein biosynthesis. May increase the efficiency of translation by recycling ribosomes from one round of translation to another. In Halalkalibacterium halodurans (strain ATCC BAA-125 / DSM 18197 / FERM 7344 / JCM 9153 / C-125) (Bacillus halodurans), this protein is Ribosome-recycling factor.